A 394-amino-acid chain; its full sequence is Putative bacilysin exporter BacE (394 aa).

A run of 11 helical transmembrane segments spans residues 11 to 31 (LLYG…ALLI), 43 to 63 (SGVI…GVLV), 69 to 89 (IKIM…LTFL), 92 to 112 (GEYP…GVFF), 142 to 162 (IIVG…ELAV), 166 to 186 (GVTY…FVPI), 215 to 235 (MFTM…FPIV), 244 to 264 (IGNF…AALV), 288 to 308 (LFLF…FFIA), 332 to 352 (IFSV…MFIN), and 353 to 373 (ILSA…LFLH).

Belongs to the major facilitator superfamily. Drug:H(+) antiporter-3 (DHA3) (TC 2.A.1.21) family.

The protein localises to the cell membrane. In terms of biological role, part of the bacilysin biosynthesis operon. May be involved in self-resistance to bacilysin by permitting efflux of this antibiotic. The polypeptide is Putative bacilysin exporter BacE (bacE) (Bacillus subtilis (strain 168)).